The following is an 836-amino-acid chain: Translation initiation factor IF-2 (836 aa).

A disordered region spans residues 1–234 (MSDTDGKKPL…SLAAMKRKQE (234 aa)). The segment covering 18-27 (SGQVKQSFSH) has biased composition (polar residues). The span at 50–60 (SGSSTTTSSPS) shows a compositional bias: low complexity. Residues 88–156 (KLREVEDAKR…ATRRAEEAKR (69 aa)) show a composition bias toward basic and acidic residues. The segment covering 167–176 (PAESRASAPP) has biased composition (low complexity). Residues 185-206 (SRKEREREADRDRTTKKDDSRR) are compositionally biased toward basic and acidic residues. A tr-type G domain is found at 333–501 (PRPPIITIMG…NIALQAEILD (169 aa)). Positions 342-349 (GHVDHGKT) are G1. 342-349 (GHVDHGKT) serves as a coordination point for GTP. The G2 stretch occupies residues 367 to 371 (GITQH). Residues 389-392 (DTPG) are G3. GTP contacts are provided by residues 389 to 393 (DTPGH) and 443 to 446 (NKID). The G4 stretch occupies residues 443–446 (NKID). The interval 479–481 (SAK) is G5.

It belongs to the TRAFAC class translation factor GTPase superfamily. Classic translation factor GTPase family. IF-2 subfamily.

It is found in the cytoplasm. Its function is as follows. One of the essential components for the initiation of protein synthesis. Protects formylmethionyl-tRNA from spontaneous hydrolysis and promotes its binding to the 30S ribosomal subunits. Also involved in the hydrolysis of GTP during the formation of the 70S ribosomal complex. In Cereibacter sphaeroides (strain ATCC 17029 / ATH 2.4.9) (Rhodobacter sphaeroides), this protein is Translation initiation factor IF-2.